Consider the following 136-residue polypeptide: uncharacterized protein (136 aa).

2 disordered regions span residues Gln-23–Asn-44 and Asp-56–Arg-95. Positions Ser-61–Glu-79 are enriched in low complexity. Residues Glu-80–Glu-91 show a composition bias toward acidic residues.

This is an uncharacterized protein from Saccharomyces cerevisiae (strain ATCC 204508 / S288c) (Baker's yeast).